We begin with the raw amino-acid sequence, 416 residues long: Choline/ethanolaminephosphotransferase 1 (416 aa).

A disordered region spans residues 1 to 20; that stretch reads MSGHRSTRKRCGDSHPESPV. S18 bears the Phosphoserine mark. T40 carries the phosphothreonine modification. Residue N86 coordinates CDP-choline. A run of 2 helical transmembrane segments spans residues 89-108 and 116-133; these read TIIGLSINICTTILLVFYCP and LWAYIACACGLFIYQSLD. Residue D133 participates in Mg(2+) binding. N-linked (GlcNAc...) asparagine glycosylation occurs at N144. A CDP-choline-binding site is contributed by E151. D154 is a binding site for Mg(2+). The active-site Proton acceptor is H155. Transmembrane regions (helical) follow at residues 156 to 176, 180 to 199, 210 to 230, 246 to 267, 286 to 306, 315 to 334, 349 to 363, and 368 to 388; these read GCDSLSTVFVVLGTCIAVQLG, DWMFFCCFAGTFMFYCAHWQ, IIDVTEVQIFIIIMHLLAVIG, MKIFPALCTVAGTIFSCTNYFR, VLSPFLHIGSVITLAAMIYKK, HPCLYILTFGFVSAKITNKL, TAFIGPALLFLDQYF, and DEYIVLWIALVFSFFDLIRYC. D158 serves as a coordination point for Mg(2+).

The protein belongs to the CDP-alcohol phosphatidyltransferase class-I family. In terms of assembly, homodimer. Requires Mg(2+) as cofactor. Mn(2+) serves as cofactor. In terms of tissue distribution, ubiquitously expressed.

The protein resides in the endoplasmic reticulum membrane. Its subcellular location is the nucleus membrane. It catalyses the reaction CDP-ethanolamine + a 1,2-diacyl-sn-glycerol = a 1,2-diacyl-sn-glycero-3-phosphoethanolamine + CMP + H(+). It carries out the reaction CDP-choline + a 1,2-diacyl-sn-glycerol = a 1,2-diacyl-sn-glycero-3-phosphocholine + CMP + H(+). The enzyme catalyses 1-O-alkyl-2-acyl-sn-glycerol + CDP-choline = a 1-O-alkyl-2-acyl-sn-glycero-3-phosphocholine + CMP + H(+). The catalysed reaction is a 1-O-(1Z-alkenyl)-2-acyl-sn-glycerol + CDP-choline = a 1-O-(1Z-alkenyl)-2-acyl-sn-glycero-3-phosphocholine + CMP + H(+). It catalyses the reaction 1,2-dioctanoyl-sn-glycerol + CDP-choline = 1,2-dioctanoyl-sn-glycero-3-phosphocholine + CMP + H(+). It carries out the reaction 1,2-didecanoyl-sn-glycerol + CDP-choline = 1,2-didecanoyl-sn-glycero-3-phosphocholine + CMP + H(+). The enzyme catalyses CDP-choline + 1,2-di-(9Z-octadecenoyl)-sn-glycerol = 1,2-di-(9Z-octadecenoyl)-sn-glycero-3-phosphocholine + CMP + H(+). The catalysed reaction is 1-hexadecanoyl-2-(9Z-octadecenoyl)-sn-glycerol + CDP-choline = 1-hexadecanoyl-2-(9Z-octadecenoyl)-sn-glycero-3-phosphocholine + CMP + H(+). It catalyses the reaction CDP-ethanolamine + 1,2-di-(9Z-octadecenoyl)-sn-glycerol = 1,2-di-(9Z-octadecenoyl)-sn-glycero-3-phosphoethanolamine + CMP + H(+). It carries out the reaction 1-hexadecanoyl-2-(9Z-octadecenoyl)-sn-glycerol + CDP-ethanolamine = 1-hexadecanoyl-2-(9Z-octadecenoyl)-sn-glycero-3-phosphoethanolamine + CMP + H(+). The enzyme catalyses 1-hexadecanoyl-2-(4Z,7Z,10Z,13Z,16Z,19Z-docosahexaenoyl)-sn-glycerol + CDP-choline = 1-hexadecanoyl-2-(4Z,7Z,10Z,13Z,16Z,19Z-docosahexaenoyl)-sn-glycero-3-phosphocholine + CMP + H(+). The catalysed reaction is 1,2-di-(9Z-hexadecenoyl)-sn-glycerol + CDP-choline = 1,2-di-(9Z-hexadecenoyl)-sn-glycero-3-phosphocholine + CMP + H(+). It catalyses the reaction 1,2-di-(9Z-hexadecenoyl)-sn-glycerol + CDP-ethanolamine = 1,2-di-(9Z-hexadecenoyl)-sn-glycero-3-phosphoethanolamine + CMP + H(+). It carries out the reaction 1-O-hexadecyl-2-acetyl-sn-glycerol + CDP-choline = 1-O-hexadecyl-2-acetyl-sn-glycero-3-phosphocholine + CMP + H(+). The enzyme catalyses 1-O-hexadecyl-2-(5Z,8Z,11Z,14Z-eicosatetraenoyl)-sn-glycerol + CDP-choline = 1-O-hexadecyl-2-(5Z,8Z,11Z,14Z)-eicosatetraenoyl-sn-glycero-3-phosphocholine + CMP + H(+). It functions in the pathway phospholipid metabolism; phosphatidylethanolamine biosynthesis; phosphatidylethanolamine from ethanolamine: step 3/3. Its pathway is phospholipid metabolism; phosphatidylcholine biosynthesis; phosphatidylcholine from phosphocholine: step 2/2. In terms of biological role, catalyzes both phosphatidylcholine and phosphatidylethanolamine biosynthesis from CDP-choline and CDP-ethanolamine, respectively. Involved in protein-dependent process of phospholipid transport to distribute phosphatidyl choline to the lumenal surface. Has a higher cholinephosphotransferase activity than ethanolaminephosphotransferase activity. This is Choline/ethanolaminephosphotransferase 1 from Homo sapiens (Human).